The following is a 253-amino-acid chain: Blue-light photoreceptor (253 aa).

Residues 6-79 (QFDVILKALN…AKIRHAINEK (74 aa)) enclose the PAS domain. Cysteine 56 bears the S-4a-FMN cysteine mark. The region spanning 80 to 133 (STANVLLKNYRKDGTSFMNELTIEPIYDDHEHLYFVGIQKDVTTEHDYQLELEK) is the PAC domain. The region spanning 142–253 (STPIVPIKEN…STIKEALQFY (112 aa)) is the STAS domain.

In terms of processing, FMN binds covalently to cysteine after exposure to blue light and this bond is spontaneously broken in the dark.

Functionally, exhibits the same spectroscopical features and blue-light induced photochemistry as plants phototropins, with the reversible formation of a blue-shifted photoproduct, assigned to an FMN-cysteine thiol adduct. Positive regulator in the activation of the general stress transcription factor sigma-B. In Listeria monocytogenes serovar 1/2a (strain ATCC BAA-679 / EGD-e), this protein is Blue-light photoreceptor.